A 202-amino-acid polypeptide reads, in one-letter code: Na(+)-translocating NADH-quinone reductase subunit E (202 aa).

Transmembrane regions (helical) follow at residues 11–31, 35–55, 81–101, 114–134, 144–164, and 180–200; these read SVFI…FLAM, INAA…TVPA, FLSF…MEMV, GVFL…LFMV, VVYG…LAGI, and LGIT…FGGI.

It belongs to the NqrDE/RnfAE family. As to quaternary structure, composed of six subunits; NqrA, NqrB, NqrC, NqrD, NqrE and NqrF.

It is found in the cell inner membrane. The catalysed reaction is a ubiquinone + n Na(+)(in) + NADH + H(+) = a ubiquinol + n Na(+)(out) + NAD(+). In terms of biological role, NQR complex catalyzes the reduction of ubiquinone-1 to ubiquinol by two successive reactions, coupled with the transport of Na(+) ions from the cytoplasm to the periplasm. NqrA to NqrE are probably involved in the second step, the conversion of ubisemiquinone to ubiquinol. The chain is Na(+)-translocating NADH-quinone reductase subunit E from Cellvibrio japonicus (strain Ueda107) (Pseudomonas fluorescens subsp. cellulosa).